Reading from the N-terminus, the 241-residue chain is ATP synthase subunit a (241 aa).

A run of 5 helical transmembrane segments spans residues 30-50 (GQVFMTSWLLIGALLALVVIG), 91-111 (FIGTLFLFIFVSNWGGALVPW), 128-148 (INTTVALALLVSLSYFYAGLS), 193-213 (LVVAVLVFLVPLVLPVPVMFL), and 214-234 (GLFTSAIQALIFATLAAYYIG).

It belongs to the ATPase A chain family. F-type ATPases have 2 components, CF(1) - the catalytic core - and CF(0) - the membrane proton channel. CF(1) has five subunits: alpha(3), beta(3), gamma(1), delta(1), epsilon(1). CF(0) has four main subunits: a, b, b' and c.

The protein resides in the cellular thylakoid membrane. Key component of the proton channel; it plays a direct role in the translocation of protons across the membrane. The protein is ATP synthase subunit a of Prochlorococcus marinus (strain NATL1A).